A 227-amino-acid polypeptide reads, in one-letter code: NAD(P)H-hydrate epimerase (227 aa).

Positions 12–221 (SRLVDELAIA…DIGVPRALLE (210 aa)) constitute a YjeF N-terminal domain. Position 59–63 (59–63 (NNGGD)) interacts with (6S)-NADPHX. K(+)-binding residues include Asn-60 and Asp-131. Residues 135-141 (GTGATGE) and Asp-164 contribute to the (6S)-NADPHX site. K(+) is bound at residue Thr-167.

The protein belongs to the NnrE/AIBP family. K(+) serves as cofactor.

It catalyses the reaction (6R)-NADHX = (6S)-NADHX. The enzyme catalyses (6R)-NADPHX = (6S)-NADPHX. In terms of biological role, catalyzes the epimerization of the S- and R-forms of NAD(P)HX, a damaged form of NAD(P)H that is a result of enzymatic or heat-dependent hydration. This is a prerequisite for the S-specific NAD(P)H-hydrate dehydratase to allow the repair of both epimers of NAD(P)HX. The chain is NAD(P)H-hydrate epimerase from Pirellula staleyi (strain ATCC 27377 / DSM 6068 / ICPB 4128) (Pirella staleyi).